A 365-amino-acid polypeptide reads, in one-letter code: tRNA(Met) cytidine acetate ligase (365 aa).

ATP-binding positions include 7 to 20 (IAEF…HKYL), Gly96, Asn152, and Arg175.

This sequence belongs to the TmcAL family.

The protein resides in the cytoplasm. The catalysed reaction is cytidine(34) in elongator tRNA(Met) + acetate + ATP = N(4)-acetylcytidine(34) in elongator tRNA(Met) + AMP + diphosphate. Its function is as follows. Catalyzes the formation of N(4)-acetylcytidine (ac(4)C) at the wobble position of elongator tRNA(Met), using acetate and ATP as substrates. First activates an acetate ion to form acetyladenylate (Ac-AMP) and then transfers the acetyl group to tRNA to form ac(4)C34. This Streptococcus pneumoniae (strain P1031) protein is tRNA(Met) cytidine acetate ligase.